Here is a 562-residue protein sequence, read N- to C-terminus: Bifunctional coenzyme A synthase (562 aa).

Phosphoserine occurs at positions 177 and 182. Positions 179–357 (VARSAKQPVR…HKRPELPPGC (179 aa)) are phosphopantetheine adenylyltransferase. In terms of domain architecture, DPCK spans 359-562 (VIGLTGISGS…KRISEAPSDP (204 aa)). Residue 364-371 (GISGSGKS) coordinates ATP.

This sequence in the central section; belongs to the eukaryotic CoaD family. In terms of assembly, monomer. Post-translationally, the N-terminus is blocked.

The protein localises to the cytoplasm. It localises to the mitochondrion matrix. It catalyses the reaction (R)-4'-phosphopantetheine + ATP + H(+) = 3'-dephospho-CoA + diphosphate. It carries out the reaction 3'-dephospho-CoA + ATP = ADP + CoA + H(+). It participates in cofactor biosynthesis; coenzyme A biosynthesis; CoA from (R)-pantothenate: step 4/5. Its pathway is cofactor biosynthesis; coenzyme A biosynthesis; CoA from (R)-pantothenate: step 5/5. Bifunctional enzyme that catalyzes the fourth and fifth sequential steps of CoA biosynthetic pathway. The fourth reaction is catalyzed by the phosphopantetheine adenylyltransferase, coded by the coaD domain; the fifth reaction is catalyzed by the dephospho-CoA kinase, coded by the coaE domain. May act as a point of CoA biosynthesis regulation. This Sus scrofa (Pig) protein is Bifunctional coenzyme A synthase.